The primary structure comprises 156 residues: Small ribosomal subunit protein uS7 (156 aa).

It belongs to the universal ribosomal protein uS7 family. Part of the 30S ribosomal subunit. Contacts proteins S9 and S11.

One of the primary rRNA binding proteins, it binds directly to 16S rRNA where it nucleates assembly of the head domain of the 30S subunit. Is located at the subunit interface close to the decoding center, probably blocks exit of the E-site tRNA. In Tremblaya princeps, this protein is Small ribosomal subunit protein uS7.